The primary structure comprises 167 residues: Claudin domain-containing protein 2 (167 aa).

The next 4 helical transmembrane spans lie at 7–27 (LQSGGILLSLVANVLMVLSTA), 59–79 (LAVTVACMVLAVGVGVVGMVM), 96–116 (TSAFLFLGGLLLLTALIGYTV), and 134–154 (WLALPFSILAGFCFLLADMIM).

Belongs to the PMP-22/EMP/MP20 family.

It localises to the membrane. The chain is Claudin domain-containing protein 2 (CLDND2) from Homo sapiens (Human).